The chain runs to 3214 residues: Ciliogenesis and planar polarity effector 1 (3214 aa).

2 consecutive transmembrane segments (helical) span residues 593-613 and 632-652; these read KLMLNYTILCITHFFYILQFI and AWVLCVFQLFHQCLSVHYWDM. Disordered regions lie at residues 1496–1523, 1644–1667, 1879–1991, 2047–2142, 2214–2241, 2398–2440, 2491–2529, 2622–2650, 2824–2855, 3037–3127, and 3158–3181; these read VGKKPSDKKKVSNQKENSQRKEDDETPG, GNQSGSTLENPLQSGSTSENPLQS, DGRH…HRAQ, FGES…FPPA, SLSDSCQPPVSQRTVHTTLPSPSDSSHC, GITQ…ISND, GSHDASTNTDPDKEGPSQKADSESSKNPQATAASSGHEP, TFQSQESASSTRGLISEPAKVTQSCQSGE, VSLQTQEDVEEQKDAEETSETEFSEAENHSSQ, TAPA…CRED, and MSPADEEEPEPPLLAGGMDSVSES. Residues 1512-1523 are compositionally biased toward basic and acidic residues; the sequence is NSQRKEDDETPG. Positions 1932–1942 are enriched in basic and acidic residues; sequence QCSRKEPRDAS. Composition is skewed to polar residues over residues 1943–1953, 1971–1984, and 2047–2068; these read VDTNLTEQKGA, NGAQDTSQTPQKTQ, and FGESQVSNSTKSDCIEVNSRQR. A compositionally biased stretch (basic and acidic residues) spans 2079-2099; the sequence is CTREPGKNSPADHKRISRPDQ. Positions 2215–2241 are enriched in polar residues; the sequence is LSDSCQPPVSQRTVHTTLPSPSDSSHC. The span at 2500–2514 shows a compositional bias: basic and acidic residues; sequence DPDKEGPSQKADSES. Composition is skewed to polar residues over residues 2515–2524 and 2622–2634; these read SKNPQATAAS and TFQSQESASSTRG. Residues 2830–2848 show a composition bias toward acidic residues; sequence EDVEEQKDAEETSETEFSE. Residues 3090 to 3107 are compositionally biased toward polar residues; the sequence is RGSSQLRGSQPPCQSQKP.

As to quaternary structure, interacts with FUZ; INTU and WDPCP; the interactors are proposed to form the core CPLANE (ciliogenesis and planar polarity effectors) complex.

Its subcellular location is the membrane. It localises to the cell projection. It is found in the cilium. Functionally, involved in ciliogenesis. Involved in the establishment of cell polarity required for directional cell migration. Proposed to act in association with the CPLANE (ciliogenesis and planar polarity effectors) complex. Involved in recruitment of peripheral IFT-A proteins to basal bodies. This chain is Ciliogenesis and planar polarity effector 1, found in Mus musculus (Mouse).